The sequence spans 457 residues: Argininosuccinate lyase (457 aa).

Belongs to the lyase 1 family. Argininosuccinate lyase subfamily.

It is found in the cytoplasm. It carries out the reaction 2-(N(omega)-L-arginino)succinate = fumarate + L-arginine. It participates in amino-acid biosynthesis; L-arginine biosynthesis; L-arginine from L-ornithine and carbamoyl phosphate: step 3/3. This chain is Argininosuccinate lyase, found in Cronobacter sakazakii (strain ATCC BAA-894) (Enterobacter sakazakii).